Here is a 404-residue protein sequence, read N- to C-terminus: S-adenosylmethionine synthase (404 aa).

The span at 1 to 13 (MSHSRYFFTSESV) shows a compositional bias: polar residues. Residues 1-20 (MSHSRYFFTSESVSEGHPDK) form a disordered region. H17 lines the ATP pocket. A Mg(2+)-binding site is contributed by D19. E45 serves as a coordination point for K(+). Residues E58 and Q101 each contribute to the L-methionine site. Positions 101-111 (QSPDINRGVDR) are flexible loop. Residues 172 to 174 (DSK), 246 to 247 (RF), D255, 261 to 262 (RK), A278, and K282 contribute to the ATP site. Residue D255 participates in L-methionine binding. L-methionine is bound at residue K286.

This sequence belongs to the AdoMet synthase family. In terms of assembly, homotetramer; dimer of dimers. Requires Mg(2+) as cofactor. K(+) is required as a cofactor.

The protein resides in the cytoplasm. It catalyses the reaction L-methionine + ATP + H2O = S-adenosyl-L-methionine + phosphate + diphosphate. It participates in amino-acid biosynthesis; S-adenosyl-L-methionine biosynthesis; S-adenosyl-L-methionine from L-methionine: step 1/1. Its function is as follows. Catalyzes the formation of S-adenosylmethionine (AdoMet) from methionine and ATP. The overall synthetic reaction is composed of two sequential steps, AdoMet formation and the subsequent tripolyphosphate hydrolysis which occurs prior to release of AdoMet from the enzyme. This is S-adenosylmethionine synthase from Chlorobaculum parvum (strain DSM 263 / NCIMB 8327) (Chlorobium vibrioforme subsp. thiosulfatophilum).